Reading from the N-terminus, the 577-residue chain is Galectin-3-binding protein (577 aa).

The first 18 residues, 1–18 (MALLWLLSVFLLVPGTQG), serve as a signal peptide directing secretion. One can recognise an SRCR domain in the interval 24-124 (MRLVNGASAN…HEKDAGVVCS (101 aa)). 3 cysteine pairs are disulfide-bonded: C49-C113, C62-C123, and C93-C103. N-linked (GlcNAc...) asparagine glycosylation occurs at N69. N-linked (GlcNAc...) asparagine glycosylation occurs at N125. The BTB domain occupies 153 to 221 (CDLFIQVTGQ…FYSRRIEVSM (69 aa)). Positions 260 to 360 (PLDLYAYARA…MLPQELFELQ (101 aa)) constitute a BACK domain. N-linked (GlcNAc...) asparagine glycosylation is found at N362, N398, N543, and N572.

Homodimers and homomultimers. The multimers form ring-like structures with a diameter of 30-40 nm. Binds LGALS1 and LGALS3. Binds ITGB1, COL4A1, COL5A1, COL6A1, FN1 and NID. Interacts with PPIC (in vitro). The unglycosylated form interacts with PDE4DIP isoform 2/MMG8/SMYLE; this interaction may connect a pericentrosomal complex to the gamma-tubulin ring complex (gamma-TuRC) to promote microtubule assembly and acetylation. In terms of processing, N-glycosylated. Detected in embryo, liver, spleen, kidney, lung, heart, intestine, thymus and lymph node.

The protein localises to the secreted. The protein resides in the extracellular space. It localises to the extracellular matrix. Functionally, promotes integrin-mediated cell adhesion. May stimulate host defense against viruses and tumor cells. This Mus musculus (Mouse) protein is Galectin-3-binding protein (Lgals3bp).